The chain runs to 599 residues: Adenine deaminase (599 aa).

Residues 1 to 31 (MARSNRRGGRGDPEDDPAWAPPGHRCAGERA) form a disordered region.

This sequence belongs to the metallo-dependent hydrolases superfamily. Adenine deaminase family. It depends on Mn(2+) as a cofactor.

It carries out the reaction adenine + H2O + H(+) = hypoxanthine + NH4(+). The sequence is that of Adenine deaminase from Methanopyrus kandleri (strain AV19 / DSM 6324 / JCM 9639 / NBRC 100938).